The chain runs to 211 residues: Ubiquitin-conjugating enzyme E2 S (211 aa).

A UBC core domain is found at 11–157 (HVIRQVYKEV…ARLMTEIHAH (147 aa)). C95 functions as the Glycyl thioester intermediate in the catalytic mechanism. Positions 157 to 167 (HSSSLRGKDPT) are enriched in basic and acidic residues. The segment at 157 to 211 (HSSSLRGKDPTDPCSSASVTGALGDGPMAKKHAGDRDKKLAAKKKTDKKRALRRL) is disordered. Basic residues predominate over residues 197–211 (AAKKKTDKKRALRRL).

This sequence belongs to the ubiquitin-conjugating enzyme family.

The catalysed reaction is S-ubiquitinyl-[E1 ubiquitin-activating enzyme]-L-cysteine + [E2 ubiquitin-conjugating enzyme]-L-cysteine = [E1 ubiquitin-activating enzyme]-L-cysteine + S-ubiquitinyl-[E2 ubiquitin-conjugating enzyme]-L-cysteine.. It functions in the pathway protein modification; protein ubiquitination. Its function is as follows. Catalyzes the covalent attachment of ubiquitin to other proteins. Acts as an essential factor of the anaphase promoting complex/cyclosome (APC/C), a cell cycle-regulated ubiquitin ligase that controls progression through mitosis. Acts by specifically elongating 'Lys-11'-linked polyubiquitin chains initiated by the E2 enzyme ube2c/ubch10 on APC/C substrates, enhancing the degradation of APC/C substrates by the proteasome and promoting mitotic exit. The sequence is that of Ubiquitin-conjugating enzyme E2 S (ube2s) from Aquarana catesbeiana (American bullfrog).